We begin with the raw amino-acid sequence, 89 residues long: Late cornified envelope protein 3A (89 aa).

Composition is skewed to low complexity over residues 1-10 (MSCQQNQQQC) and 17-46 (PAKS…SERS). Disordered regions lie at residues 1-46 (MSCQ…SERS) and 62-89 (CQSS…AGCC).

This sequence belongs to the LCE family. Interacts with CYSRT1; the interaction is direct. In terms of tissue distribution, skin-specific. Expression was readily detected in adult trunk skin, adult arm skin, fetal skin, penal skin, vulva, esophagus and tongue. Not expressed in the cervix, rectum, lung, colon, or placenta.

A structural component of the cornified envelope of the stratum corneum involved in innate cutaneous host defense. Possesses defensin-like antimicrobial activity against a broad spectrum of Gram-positive and Gram-negative bacteria, both aerobic and anaerobic species. Upon inflammation, may regulate skin barrier repair by shaping cutaneous microbiota composition and immune response to bacterial antigens. The polypeptide is Late cornified envelope protein 3A (Homo sapiens (Human)).